Consider the following 197-residue polypeptide: Small ribosomal subunit protein uS4B (197 aa).

The region spanning 88-153 (CRLDNMVYRM…IEKYLSNLKN (66 aa)) is the S4 RNA-binding domain.

It belongs to the universal ribosomal protein uS4 family. In terms of assembly, part of the 30S ribosomal subunit. Contacts protein S5. The interaction surface between S4 and S5 is involved in control of translational fidelity.

Functionally, one of the primary rRNA binding proteins, it binds directly to 16S rRNA where it nucleates assembly of the body of the 30S subunit. Its function is as follows. With S5 and S12 plays an important role in translational accuracy. The polypeptide is Small ribosomal subunit protein uS4B (Alkaliphilus oremlandii (strain OhILAs) (Clostridium oremlandii (strain OhILAs))).